A 325-amino-acid chain; its full sequence is Elongation factor P--(R)-beta-lysine ligase (325 aa).

Substrate is bound at residue 76–78; sequence SPE. Residues 100–102 and Asn109 contribute to the ATP site; that span reads RNE. Residue Tyr118 participates in substrate binding. Position 244 to 245 (244 to 245) interacts with ATP; sequence EL. A substrate-binding site is contributed by Glu251. Gly300 is a binding site for ATP.

Belongs to the class-II aminoacyl-tRNA synthetase family. EpmA subfamily. Homodimer.

The enzyme catalyses D-beta-lysine + L-lysyl-[protein] + ATP = N(6)-((3R)-3,6-diaminohexanoyl)-L-lysyl-[protein] + AMP + diphosphate + H(+). With EpmB is involved in the beta-lysylation step of the post-translational modification of translation elongation factor P (EF-P) on 'Lys-34'. Catalyzes the ATP-dependent activation of (R)-beta-lysine produced by EpmB, forming a lysyl-adenylate, from which the beta-lysyl moiety is then transferred to the epsilon-amino group of EF-P 'Lys-34'. The polypeptide is Elongation factor P--(R)-beta-lysine ligase (Salmonella typhi).